A 301-amino-acid chain; its full sequence is Methionyl-tRNA formyltransferase (301 aa).

109–112 lines the (6S)-5,6,7,8-tetrahydrofolate pocket; it reads SLLP.

This sequence belongs to the Fmt family.

It carries out the reaction L-methionyl-tRNA(fMet) + (6R)-10-formyltetrahydrofolate = N-formyl-L-methionyl-tRNA(fMet) + (6S)-5,6,7,8-tetrahydrofolate + H(+). Functionally, attaches a formyl group to the free amino group of methionyl-tRNA(fMet). The formyl group appears to play a dual role in the initiator identity of N-formylmethionyl-tRNA by promoting its recognition by IF2 and preventing the misappropriation of this tRNA by the elongation apparatus. The polypeptide is Methionyl-tRNA formyltransferase (Novosphingobium aromaticivorans (strain ATCC 700278 / DSM 12444 / CCUG 56034 / CIP 105152 / NBRC 16084 / F199)).